A 335-amino-acid polypeptide reads, in one-letter code: MHSNPFLTQFILEEQRSIPSATGDFTGLLNDIVTACKTISHLVNRGGLIDILGAAGTENIQGEGQKKLDVISNDIMVNSLEWTGHLGAMASEEIEGIIPIPGQYPKGKYLLLFDPLDGSSNIDINISVGTIFSILRCPDDVSEPTQEDFLQPGTQQVCAGFCVYGPTTMMVLTAGHGVNGFTLDQDIGEFILTHPNMTIPEDTMEFAINMSNQRFWAAPVQRYIEDCLQGKEGCRNKNFNMRWVASMVSEVYRILTRGGIFMYPWDSRDPDKPGRLRLMYEANPMSFIVEQAGGVSSTGDQRILEINPEGIHQRVPVILGSKNEVERVIAYHQEA.

The Mg(2+) site is built by E92, D114, L116, and D117. Residues 117–120 (DGSS) and N209 each bind substrate. E281 lines the Mg(2+) pocket.

Belongs to the FBPase class 1 family. In terms of assembly, homotetramer. Mg(2+) serves as cofactor.

It is found in the cytoplasm. It catalyses the reaction beta-D-fructose 1,6-bisphosphate + H2O = beta-D-fructose 6-phosphate + phosphate. The protein operates within carbohydrate biosynthesis; gluconeogenesis. The polypeptide is Fructose-1,6-bisphosphatase class 1 (Nitrosococcus oceani (strain ATCC 19707 / BCRC 17464 / JCM 30415 / NCIMB 11848 / C-107)).